A 626-amino-acid chain; its full sequence is Coilin (626 aa).

A phosphoserine mark is found at Ser-148 and Ser-162. Disordered stretches follow at residues 253-309 and 382-433; these read LTSQ…ISSN and RGCE…NKKS. Over residues 260 to 292 the composition is skewed to low complexity; it reads STPSESDSSSSESSSSVSDSSDLSSTSDSSSGD. Over residues 382–395 the composition is skewed to basic and acidic residues; the sequence is RGCENTEKPSEEGK. Residues 396–417 show a composition bias toward polar residues; it reads NFTTPLSDSVESENTWSNTLRS.

It belongs to the coilin family. In terms of assembly, interacts with tgs1; both proteins are required to maintain Cajal body integrity. Interacts with U2 and U5 snRNAs.

The protein localises to the cytoplasm. It localises to the nucleus. The protein resides in the cajal body. In terms of biological role, component of nuclear coiled bodies, also known as Cajal bodies or CBs, which are involved in the modification and assembly of nucleoplasmic snRNPs. Required for proper pre-mRNA splicing. In Schizosaccharomyces pombe (strain 972 / ATCC 24843) (Fission yeast), this protein is Coilin.